The following is a 528-amino-acid chain: Cytochrome P450 monooxygenase lenC (528 aa).

The chain crosses the membrane as a helical span at residues 5–27 (FVLPHPASMGASCILGLLLLTIL). Cys469 contacts heme.

The protein belongs to the cytochrome P450 family. Heme is required as a cofactor.

Its subcellular location is the membrane. It participates in alkaloid biosynthesis. Its function is as follows. Nonribosomal peptide synthetase; part of the gene cluster that mediates the biosynthesis of the ergot alkaloids lentopeptins A and B. Within the pathway, lenC catalyzes the post-NRPS oxidative modification steps using as substrate the N-acyldiketopiperazine intermediate produced by the NRPS lenA. Lentopeptin A forms via a stereospecific hydroxylation, followed by a spontaneous bicyclic lactam core formation, while lentopeptin B is produced through an initial dehydrogenation, followed by a bicyclic lactam core formation and stereospecific hydration. The phenylalanine ammonia-lyase lenB provides the cinnamic acid starter unit to the NRPS lenA for the synthesis of the N-acyldiketopiperazine intermediate which in turn is converted into lentopeptins A and B by lenC. This is Cytochrome P450 monooxygenase lenC from Aspergillus lentulus.